The sequence spans 202 residues: Transmembrane gamma-carboxyglutamic acid protein 2 (202 aa).

Positions 1-23 (MRGHPSLLLLYMALTTCLDTSPS) are cleaved as a signal peptide. Positions 24–49 (EETDQEVFLGPPEAQSFLSSHTRIPR) are excised as a propeptide. The region spanning 50-96 (ANHWDLELLTPGNLERECLEERCSWEEAREYFEDNTLTERFWESYIY) is the Gla domain. Residues 50 to 109 (ANHWDLELLTPGNLERECLEERCSWEEAREYFEDNTLTERFWESYIYNGKGGRGRVDVAS) lie on the Extracellular side of the membrane. C67 and C72 form a disulfide bridge. E70 is subject to 4-carboxyglutamate. The helical transmembrane segment at 110–130 (LAVGLTGGILLIVLAGLGAFW) threads the bilayer. Residues 131 to 202 (YLRWRQHRGQ…PPYTSLRRPH (72 aa)) are Cytoplasmic-facing. The segment at 143-202 (CPQEAGLISPLSPLNPLGPPTPLPPPPPPPPGLPTYEQALAASGVHDAPPPPYTSLRRPH) is disordered. Positions 158-175 (PLGPPTPLPPPPPPPPGL) are enriched in pro residues. Residues 175 to 178 (LPTY) carry the LPXY motif; mediates binding to WW domain-containing proteins motif. A PPXY motif; mediates binding to WW domain-containing proteins motif is present at residues 192-195 (PPPY).

In terms of assembly, interacts with NEDD4. Interacts (via cytoplasmic domain) with transcriptional coactivator YAP1. Post-translationally, gamma-carboxyglutamate residues are formed by vitamin K dependent carboxylation. These residues are essential for the binding of calcium. In terms of tissue distribution, widely expressed with highest levels in kidney. Also highly expressed in the thyroid.

The protein resides in the cell membrane. The sequence is that of Transmembrane gamma-carboxyglutamic acid protein 2 from Homo sapiens (Human).